A 796-amino-acid chain; its full sequence is Pleckstrin homology domain-containing family H member 3 (796 aa).

The N-terminal stretch at 1–18 (MPLPGGLWWLLCCRRGFT) is a signal peptide. A disordered region spans residues 28-71 (ELSGDGDEDEDDETFELRTPSPAGGGRGSLDVTLTQPTRNGPIS). The segment covering 29–41 (LSGDGDEDEDDET) has biased composition (acidic residues). Serine 30 bears the Phosphoserine mark. Residues 59–68 (VTLTQPTRNG) show a composition bias toward polar residues. In terms of domain architecture, PH spans 95–199 (DIIVKGWLYR…WGVALREVIA (105 aa)). A MyTH4 domain is found at 237-399 (HTSSALYAPL…PSLAEISALS (163 aa)). The 354-residue stretch at 404–757 (LLCTVHCPGA…ANPSPERPCR (354 aa)) folds into the FERM domain. Residue asparagine 474 is glycosylated (N-linked (GlcNAc...) asparagine). Disordered stretches follow at residues 557 to 584 (PLLD…PPSA) and 598 to 625 (KRRA…GGAS). The segment covering 563-583 (LPPPIPPREQPPCPTRRPPPS) has biased composition (pro residues). Residues 598–608 (KRRAERARRGG) are compositionally biased toward basic residues. Residue arginine 638 is modified to Omega-N-methylarginine. The tract at residues 750 to 796 (PSPERPCRSGSSSGPPSQDLPDTSPPSQHQVLEEPQGQSGCLKQLQD) is disordered. Low complexity predominate over residues 757–766 (RSGSSSGPPS). The span at 774-796 (PPSQHQVLEEPQGQSGCLKQLQD) shows a compositional bias: polar residues.

This is Pleckstrin homology domain-containing family H member 3 (Plekhh3) from Mus musculus (Mouse).